A 479-amino-acid polypeptide reads, in one-letter code: ATP-dependent RNA helicase DDX19B (479 aa).

Alanine 2 carries the N-acetylalanine modification. Residues alanine 2–glutamate 300 are N-terminal lobe. A disordered region spans residues threonine 34 to glutamate 54. Residues aspartate 55 to serine 68 form an N-terminal helix region. A Q motif motif is present at residues lysine 92–glutamate 120. ATP-binding positions include glutamine 119 and serine 138–threonine 145. The region spanning leucine 125 to isoleucine 295 is the Helicase ATP-binding domain. Residues aspartate 242–aspartate 245 carry the DEAD box motif. The tract at residues glutamate 301–asparagine 479 is C-terminal lobe. A Helicase C-terminal domain is found at threonine 306–isoleucine 474. Positions 429 and 432 each coordinate ATP.

It belongs to the DEAD box helicase family. DDX19/DBP5 subfamily. Associates with the nuclear pore complex via interaction with NUP214. Interacts with NUP214 or RNA in a mutually exclusive manner.

The protein resides in the cytoplasm. The protein localises to the nucleus. Its subcellular location is the nucleoplasm. The enzyme catalyses ATP + H2O = ADP + phosphate + H(+). ATP-dependent RNA helicase involved in mRNA export from the nucleus. Rather than unwinding RNA duplexes, DDX19B functions as a remodeler of ribonucleoprotein particles, whereby proteins bound to nuclear mRNA are dissociated and replaced by cytoplasmic mRNA binding proteins. The polypeptide is ATP-dependent RNA helicase DDX19B (DDX19B) (Homo sapiens (Human)).